Consider the following 404-residue polypeptide: 1-deoxy-D-xylulose 5-phosphate reductoisomerase (404 aa).

Positions 5, 6, 7, 8, 31, 32, 33, and 121 each coordinate NADPH. Lys122 contacts 1-deoxy-D-xylulose 5-phosphate. Residue Glu123 coordinates NADPH. A Mn(2+)-binding site is contributed by Asp147. 1-deoxy-D-xylulose 5-phosphate-binding residues include Ser148, Glu149, Ser185, and His208. Glu149 lines the Mn(2+) pocket. Gly214 is a binding site for NADPH. Residues Ser221, Asn226, Lys227, and Glu230 each coordinate 1-deoxy-D-xylulose 5-phosphate. Glu230 contributes to the Mn(2+) binding site.

It belongs to the DXR family. The cofactor is Mg(2+). Mn(2+) is required as a cofactor.

It catalyses the reaction 2-C-methyl-D-erythritol 4-phosphate + NADP(+) = 1-deoxy-D-xylulose 5-phosphate + NADPH + H(+). It participates in isoprenoid biosynthesis; isopentenyl diphosphate biosynthesis via DXP pathway; isopentenyl diphosphate from 1-deoxy-D-xylulose 5-phosphate: step 1/6. In terms of biological role, catalyzes the NADPH-dependent rearrangement and reduction of 1-deoxy-D-xylulose-5-phosphate (DXP) to 2-C-methyl-D-erythritol 4-phosphate (MEP). The polypeptide is 1-deoxy-D-xylulose 5-phosphate reductoisomerase (Prochlorococcus marinus subsp. pastoris (strain CCMP1986 / NIES-2087 / MED4)).